Consider the following 144-residue polypeptide: Maximins 7/H1 (144 aa).

The signal sequence occupies residues 1-18; it reads MNFKYIVAVSFLIASAYA. The propeptide occupies 19 to 43; that stretch reads RSEENDEQSLSQRDVLEEESLREIR. Position 70 is an asparagine amide (Asn70). Residues 74-123 constitute a propeptide that is removed on maturation; the sequence is TAEDHEVMKRLEAVMRDLDSLDYPEEAAERETRGFNQEEIANLFTKKEKR. At Leu143 the chain carries Leucine amide.

The protein belongs to the bombinin family. Expressed by the skin glands.

It is found in the secreted. Its function is as follows. Maximin-7 shows antimicrobial activity against bacteria and against the fungus C.albicans. It has little hemolytic activity. In terms of biological role, maximin-H1 shows antibacterial activity against both Gram-positive and Gram-negative bacteria. It also shows antimicrobial activity against the fungus C.albicans. Shows strong hemolytic activity. The sequence is that of Maximins 7/H1 from Bombina maxima (Giant fire-bellied toad).